A 290-amino-acid chain; its full sequence is HTH-type transcriptional activator RhaR (290 aa).

Residues 179-277 (DLIMSALQQS…GMTPRDYRQR (99 aa)) enclose the HTH araC/xylS-type domain. 2 consecutive DNA-binding regions (H-T-H motif) follow at residues 196–217 (ADFC…RQQT) and 244–267 (ISDI…TREA).

Binds DNA as a dimer.

Its subcellular location is the cytoplasm. Activates expression of the rhaSR operon in response to L-rhamnose. This chain is HTH-type transcriptional activator RhaR, found in Yersinia pestis bv. Antiqua (strain Antiqua).